The following is a 929-amino-acid chain: Isoleucine--tRNA ligase (929 aa).

The 'HIGH' region signature appears at proline 58–histidine 68. Glutamate 563 contacts L-isoleucyl-5'-AMP. Positions lysine 605–serine 609 match the 'KMSKS' region motif. Lysine 608 serves as a coordination point for ATP. Positions 892, 895, 912, and 915 each coordinate Zn(2+).

This sequence belongs to the class-I aminoacyl-tRNA synthetase family. IleS type 1 subfamily. As to quaternary structure, monomer. It depends on Zn(2+) as a cofactor.

Its subcellular location is the cytoplasm. It catalyses the reaction tRNA(Ile) + L-isoleucine + ATP = L-isoleucyl-tRNA(Ile) + AMP + diphosphate. Catalyzes the attachment of isoleucine to tRNA(Ile). As IleRS can inadvertently accommodate and process structurally similar amino acids such as valine, to avoid such errors it has two additional distinct tRNA(Ile)-dependent editing activities. One activity is designated as 'pretransfer' editing and involves the hydrolysis of activated Val-AMP. The other activity is designated 'posttransfer' editing and involves deacylation of mischarged Val-tRNA(Ile). This is Isoleucine--tRNA ligase from Neisseria meningitidis serogroup A / serotype 4A (strain DSM 15465 / Z2491).